The primary structure comprises 85 residues: Probable dolichol-phosphate mannosyltransferase subunit 3 (85 aa).

2 helical membrane-spanning segments follow: residues V13 to I33 and A37 to F57.

The protein belongs to the DPM3 family.

The protein resides in the endoplasmic reticulum membrane. It participates in protein modification; protein glycosylation. Functionally, stabilizer subunit of the dolichol-phosphate-mannose synthase complex. The sequence is that of Probable dolichol-phosphate mannosyltransferase subunit 3 from Caenorhabditis briggsae.